The chain runs to 295 residues: uncharacterized protein (295 aa).

Basic residues predominate over residues 57–67 (RKLLVKQKRKS). The segment at 57–94 (RKLLVKQKRKSNKEFQSNIIKKRKDEERKGTLKTEQAN) is disordered. Over residues 79–88 (RKDEERKGTL) the composition is skewed to basic and acidic residues. Coiled-coil stretches lie at residues 87-116 (TLKTEQANEEELLQRSRLELERKAKKYDQY) and 259-286 (DVLTLRDKKLEERRKFLERDYAIKLGER).

The protein resides in the nucleus. This is an uncharacterized protein from Schizosaccharomyces pombe (strain 972 / ATCC 24843) (Fission yeast).